Here is a 288-residue protein sequence, read N- to C-terminus: Protein sprouty homolog 3 (288 aa).

The 114-residue stretch at lysine 154–asparagine 267 folds into the SPR domain.

Belongs to the sprouty family. In terms of assembly, interacts with TESK1. Interacts with USP11. Interacts with CAV1 (via C-terminus). In terms of tissue distribution, expressed in the brain with expression the highest in Purkinje cell bodies and projections in the cerebellum (at protein level). Also expressed in central and peripheral nervous system ganglion cells, superior cervical ganglion and dorsal root ganglion (at protein level). Expressed in the retinal ganglion cell layer and the inner nuclear layer (at protein level).

It localises to the cytoplasm. Functionally, inhibits neurite branching, arbor length and neurite complexity. Inhibits EGF-mediated p42/44 ERK signaling. Negatively regulates the MAPK cascade, resulting in a reduction of extracellular matrix protein accumulation. May function as an antagonist of fibroblast growth factor (FGF) pathways and may negatively modulate respiratory organogenesis. The polypeptide is Protein sprouty homolog 3 (Mus musculus (Mouse)).